Consider the following 134-residue polypeptide: MIAPDTSVLVAGFATWHEGHEAAVRALNRGVHLIAHAAVETYSVLTRLPPPHRIAPVAVHAYLADITSSNYLALDACSYRGLTDHLAEHDVTGGATYDALVGFTAKAAGAKLLTRDLRAVETYERLRVEVELVT.

A PINc domain is found at 3–126; sequence APDTSVLVAG…LRAVETYERL (124 aa). Residues aspartate 5 and aspartate 98 each coordinate Mg(2+).

The protein belongs to the PINc/VapC protein family. The cofactor is Mg(2+).

Its function is as follows. Toxic component of a type II toxin-antitoxin (TA) system. An RNase. Its cognate antitoxin is VapB40. This chain is Ribonuclease VapC40, found in Mycobacterium tuberculosis (strain CDC 1551 / Oshkosh).